The sequence spans 414 residues: tRNA N6-adenosine threonylcarbamoyltransferase, mitochondrial (414 aa).

The transit peptide at 1-29 (MLMLRRTAGAIPKPPKSKVYGFLRRFSVH) directs the protein to the mitochondrion. N6-acetyllysine occurs at positions 74 and 140. Residues His-147 and His-151 each coordinate a divalent metal cation. Residues 169–173 (LISGG) and Asp-202 each bind substrate. Lys-203 carries the post-translational modification N6-acetyllysine. Positions 222 and 226 each coordinate substrate. 2 positions are modified to N6-acetyllysine: Lys-230 and Lys-299. Substrate is bound by residues 329-330 (SN) and Thr-357. Asp-358 is a binding site for a divalent metal cation.

It belongs to the KAE1 / TsaD family. In terms of assembly, monomer. A divalent metal cation serves as cofactor.

The protein localises to the mitochondrion. It catalyses the reaction L-threonylcarbamoyladenylate + adenosine(37) in tRNA = N(6)-L-threonylcarbamoyladenosine(37) in tRNA + AMP + H(+). Its function is as follows. Required for the formation of a threonylcarbamoyl group on adenosine at position 37 (t(6)A37) in mitochondrial tRNAs that read codons beginning with adenine. Probably involved in the transfer of the threonylcarbamoyl moiety of threonylcarbamoyl-AMP (TC-AMP) to the N6 group of A37. Involved in mitochondrial genome maintenance. The polypeptide is tRNA N6-adenosine threonylcarbamoyltransferase, mitochondrial (Mus musculus (Mouse)).